The following is a 380-amino-acid chain: Cyclohexane-1-carbonyl-CoA dehydrogenase (380 aa).

This sequence belongs to the acyl-CoA dehydrogenase family. In terms of assembly, homotetramer. The cofactor is FAD.

It carries out the reaction cyclohexane-1-carbonyl-CoA + oxidized [electron-transfer flavoprotein] + H(+) = cyclohex-1-ene-1-carbonyl-CoA + reduced [electron-transfer flavoprotein]. Functionally, acyl-CoA dehydrogenase involved in the anaerobic degradation of cyclohexane carboxylic acid (CHC). Catalyzes the 1,2-dehydrogenation of cyclohexane-1-carbonyl-CoA (CHCoA) to cyclohex-1-ene-1-carbonyl-CoA (CHeneCoA). An alternative substrate, cyclohex-3-ene-1-carboxyl-CoA can be converted to the corresponding cyclohexadiene-1-carboxyl-CoA isomers (30% rate compared to CHC). The protein is Cyclohexane-1-carbonyl-CoA dehydrogenase of Geobacter metallireducens (strain ATCC 53774 / DSM 7210 / GS-15).